The primary structure comprises 146 residues: Acidic phospholipase A2 CM-II (146 aa).

The N-terminal stretch at 1-21 (MNPAHLLILAAVCVSPLGAFS) is a signal peptide. Positions 22-27 (NRPMPL) are excised as a propeptide. Cystine bridges form between Cys38–Cys98, Cys53–Cys145, Cys55–Cys71, Cys70–Cys126, Cys77–Cys119, Cys87–Cys112, and Cys105–Cys117. Ca(2+) contacts are provided by Tyr54, Gly56, and Gly58. Residue His74 is part of the active site. Asp75 is a Ca(2+) binding site. Asp120 is a catalytic residue.

The protein belongs to the phospholipase A2 family. Group I subfamily. D49 sub-subfamily. Requires Ca(2+) as cofactor. In terms of tissue distribution, expressed by the venom gland.

The protein localises to the secreted. It catalyses the reaction a 1,2-diacyl-sn-glycero-3-phosphocholine + H2O = a 1-acyl-sn-glycero-3-phosphocholine + a fatty acid + H(+). In terms of biological role, PLA2 catalyzes the calcium-dependent hydrolysis of the 2-acyl groups in 3-sn-phosphoglycerides. Is able to suppress the acetylcholine (ACh)-evoked current mediated by alpha-7 (CHRNA7)-similar nAChRs in L.stagnalis neurons (IC(50)=37 nM) and to compete with alpha-bungarotoxin for binding to muscle- and alpha-7 neuronal nAChR types, as well as to AChBPs. In inhibition of alpha-bungarotoxin binding, this toxin is similarly active against T.californica nAChR (IC(50)=1.2 uM), human alpha-7 nAChR (IC(50)=3.2 uM), and L.stagnalis AChBP (IC(50)=1.0 uM), whereas it is not active against A.californica AChBP (IC(50)&gt;100 uM). The protein is Acidic phospholipase A2 CM-II of Naja kaouthia (Monocled cobra).